The chain runs to 188 residues: Putative manganese efflux pump MntP (188 aa).

The next 6 helical transmembrane spans lie at 2–22 (LYIE…AVSV), 40–60 (IASV…TMGL), 66–86 (ICAF…GKMI), 107–127 (LCGL…SLAI), 133–153 (LLQA…GVYF), and 167–187 (LIGG…HLFF).

Belongs to the MntP (TC 9.B.29) family.

It is found in the cell inner membrane. Its function is as follows. Probably functions as a manganese efflux pump. This Parabacteroides distasonis (strain ATCC 8503 / DSM 20701 / CIP 104284 / JCM 5825 / NCTC 11152) protein is Putative manganese efflux pump MntP.